A 58-amino-acid chain; its full sequence is Small ribosomal subunit protein bS21 (58 aa).

The tract at residues 36–58 is disordered; the sequence is EHYEKPSVKRKKKSEAARRRKYR. Basic residues predominate over residues 43-58; that stretch reads VKRKKKSEAARRRKYR.

This sequence belongs to the bacterial ribosomal protein bS21 family.

This chain is Small ribosomal subunit protein bS21, found in Symbiobacterium thermophilum (strain DSM 24528 / JCM 14929 / IAM 14863 / T).